A 293-amino-acid chain; its full sequence is NAD kinase (293 aa).

Asp68 functions as the Proton acceptor in the catalytic mechanism. Residues 68-69 (DG), 142-143 (ND), Arg153, Asp172, and 183-188 (TAYSLS) contribute to the NAD(+) site.

It belongs to the NAD kinase family. The cofactor is a divalent metal cation.

It is found in the cytoplasm. The enzyme catalyses NAD(+) + ATP = ADP + NADP(+) + H(+). Functionally, involved in the regulation of the intracellular balance of NAD and NADP, and is a key enzyme in the biosynthesis of NADP. Catalyzes specifically the phosphorylation on 2'-hydroxyl of the adenosine moiety of NAD to yield NADP. This chain is NAD kinase, found in Lachnospira eligens (strain ATCC 27750 / DSM 3376 / VPI C15-48 / C15-B4) (Eubacterium eligens).